The chain runs to 582 residues: PCNA-interacting partner (582 aa).

Polar residues-rich tracts occupy residues 471 to 487 and 501 to 510; these read GVNSSVGRPTIGTSSGN and KSSSLTGNTS. Positions 471–514 are disordered; sequence GVNSSVGRPTIGTSSGNVHLGRSEKEKVARKSSSLTGNTSSKRK.

This sequence belongs to the PARI family. Interacts with RAD51 and PCNA. Interacts with PARP1. Interacts with TASOR.

It localises to the cytoplasm. It is found in the nucleus. In terms of biological role, required to suppress inappropriate homologous recombination, thereby playing a central role DNA repair and in the maintenance of genomic stability. Antagonizes homologous recombination by interfering with the formation of the RAD51-DNA homologous recombination structure. Binds single-strand DNA and poly(A) homopolymers. Positively regulate the poly(ADP-ribosyl)ation activity of PARP1; however such function may be indirect. The chain is PCNA-interacting partner (PARPBP) from Bos taurus (Bovine).